A 58-amino-acid chain; its full sequence is MLGWTLMFLVVAIIAGLFGFTGIAGAAAGIAKIIFFLFIVLLVISLLVNAIKGRAPRP.

Helical transmembrane passes span 6–26 (LMFL…IAGA) and 28–48 (AGIA…SLLV).

It belongs to the UPF0391 family.

It localises to the cell membrane. In Shewanella putrefaciens (strain CN-32 / ATCC BAA-453), this protein is UPF0391 membrane protein Sputcn32_1322.